The chain runs to 110 residues: UPF0145 protein LMOf2365_0219 (110 aa).

The protein belongs to the UPF0145 family.

This chain is UPF0145 protein LMOf2365_0219, found in Listeria monocytogenes serotype 4b (strain F2365).